The following is a 90-amino-acid chain: ATP synthase subunit e, mitochondrial (90 aa).

The residue at position 2 (serine 2) is an N-acetylserine. The chain crosses the membrane as a helical span at residues 7–23 (VLRWSALGAGVVYGFVH).

F-type ATP synthases have 2 components, the catalytic core F(1) and the membrane-embedded component F(0), linked together by a central stalk and a peripheral stalk. The central stalk, also called rotor shaft, is often seen as part of F(1). The peripheral stalk is seen as part of F(0). F(0) contains the membrane channel next to the rotor. F-type ATP synthases form dimers but each monomer functions independently in ATP generation. The dimer consists of 17 different polypeptides: ATP1 (subunit alpha, 3 molecules per monomer, part of F(1)), ATP2 (subunit beta, 3 copies per monomer, part of F(1)), ATP3 (subunit gamma, part of the central stalk), ATP4 (subunit b, part of the peripheral stalk), ATP5/OSCP (subunit 5/OSCP, part of the peripheral stalk), ATP6 (subunit a, part of the peripheral stalk), ATP7 (subunit d, part of the peripheral stalk), ATP8 (subunit 8, part of the peripheral stalk), OLI1 (subunit c, part of the rotor, 10 molecules per monomer), ATP14 (subunit h, part of the peripheral stalk), ATP15 (subunit epsilon, part of the central stalk), ATP16 (subunit delta, part of the central stalk), ATP17 (subunit f, part of the peripheral stalk), ATP18 (subunit i/j, part of the peripheral stalk), ATP19 (subunit k, dimer-specific, at interface between monomers), ATP20 (subunit g, at interface between monomers), TIM11 (subunit e, at interface between monomers).

Its subcellular location is the mitochondrion inner membrane. In terms of biological role, mitochondrial membrane ATP synthase (F(1)F(0) ATP synthase or Complex V) produces ATP from ADP in the presence of a proton gradient across the membrane which is generated by electron transport complexes of the respiratory chain. F-type ATP synthases consist of two structural domains, F(1) - containing the extramembraneous catalytic core, and F(0) - containing the membrane proton channel, linked together by a central stalk and a peripheral stalk. During catalysis, ATP synthesis in the catalytic domain of F(1) is coupled via a rotary mechanism of the central stalk subunits to proton translocation. Part of the complex F(0) domain. Minor subunit located with subunit a/ATP6 in the membrane. Together with subunit g/ATP20, probably contributes to membrane curvature at the site of the ATP synthase dimer, ultimately contributing to formation of cristae. The protein is ATP synthase subunit e, mitochondrial of Yarrowia lipolytica (strain CLIB 122 / E 150) (Yeast).